A 201-amino-acid chain; its full sequence is Holliday junction branch migration complex subunit RuvA (201 aa).

Residues 1–64 are domain I; that stretch reads MFAYIKGVLA…EFSHTLYGFL (64 aa). The tract at residues 65–143 is domain II; it reads SYQERDIFEI…AIGHLDTSDH (79 aa). Residues 144–153 are flexible linker; it reads IEPLTQDPKS. The tract at residues 153–201 is domain III; sequence SKSVQDAMLALINLGYNQTTAQKAIKQGMKELPEEIDLAQLITVALKHV.

It belongs to the RuvA family. As to quaternary structure, homotetramer. Forms an RuvA(8)-RuvB(12)-Holliday junction (HJ) complex. HJ DNA is sandwiched between 2 RuvA tetramers; dsDNA enters through RuvA and exits via RuvB. An RuvB hexamer assembles on each DNA strand where it exits the tetramer. Each RuvB hexamer is contacted by two RuvA subunits (via domain III) on 2 adjacent RuvB subunits; this complex drives branch migration. In the full resolvosome a probable DNA-RuvA(4)-RuvB(12)-RuvC(2) complex forms which resolves the HJ.

The protein resides in the cytoplasm. Its function is as follows. The RuvA-RuvB-RuvC complex processes Holliday junction (HJ) DNA during genetic recombination and DNA repair, while the RuvA-RuvB complex plays an important role in the rescue of blocked DNA replication forks via replication fork reversal (RFR). RuvA specifically binds to HJ cruciform DNA, conferring on it an open structure. The RuvB hexamer acts as an ATP-dependent pump, pulling dsDNA into and through the RuvAB complex. HJ branch migration allows RuvC to scan DNA until it finds its consensus sequence, where it cleaves and resolves the cruciform DNA. The sequence is that of Holliday junction branch migration complex subunit RuvA from Protochlamydia amoebophila (strain UWE25).